A 215-amino-acid chain; its full sequence is Chaperone protein TorD (215 aa).

Belongs to the TorD/DmsD family. TorD subfamily.

It is found in the cytoplasm. In terms of biological role, involved in the biogenesis of TorA. Acts on TorA before the insertion of the molybdenum cofactor and, as a result, probably favors a conformation of the apoenzyme that is competent for acquiring the cofactor. This chain is Chaperone protein TorD, found in Vibrio vulnificus (strain CMCP6).